Consider the following 859-residue polypeptide: DNA mismatch repair protein MutS (859 aa).

614–621 (GPNMGGKS) is a binding site for ATP.

This sequence belongs to the DNA mismatch repair MutS family.

In terms of biological role, this protein is involved in the repair of mismatches in DNA. It is possible that it carries out the mismatch recognition step. This protein has a weak ATPase activity. In Histophilus somni (strain 2336) (Haemophilus somnus), this protein is DNA mismatch repair protein MutS.